The primary structure comprises 655 residues: Chaperone protein dnaK1 (655 aa).

Residue Thr197 is modified to Phosphothreonine; by autocatalysis.

This sequence belongs to the heat shock protein 70 family.

Its function is as follows. Acts as a chaperone. The sequence is that of Chaperone protein dnaK1 (dnaK1) from Synechococcus elongatus (strain ATCC 33912 / PCC 7942 / FACHB-805) (Anacystis nidulans R2).